A 157-amino-acid polypeptide reads, in one-letter code: Crossover junction endodeoxyribonuclease RuvC (157 aa).

Residues Asp7, Glu66, and Asp139 contribute to the active site. Mg(2+)-binding residues include Asp7, Glu66, and Asp139.

Belongs to the RuvC family. Homodimer which binds Holliday junction (HJ) DNA. The HJ becomes 2-fold symmetrical on binding to RuvC with unstacked arms; it has a different conformation from HJ DNA in complex with RuvA. In the full resolvosome a probable DNA-RuvA(4)-RuvB(12)-RuvC(2) complex forms which resolves the HJ. The cofactor is Mg(2+).

It localises to the cytoplasm. It carries out the reaction Endonucleolytic cleavage at a junction such as a reciprocal single-stranded crossover between two homologous DNA duplexes (Holliday junction).. The RuvA-RuvB-RuvC complex processes Holliday junction (HJ) DNA during genetic recombination and DNA repair. Endonuclease that resolves HJ intermediates. Cleaves cruciform DNA by making single-stranded nicks across the HJ at symmetrical positions within the homologous arms, yielding a 5'-phosphate and a 3'-hydroxyl group; requires a central core of homology in the junction. The consensus cleavage sequence is 5'-(A/T)TT(C/G)-3'. Cleavage occurs on the 3'-side of the TT dinucleotide at the point of strand exchange. HJ branch migration catalyzed by RuvA-RuvB allows RuvC to scan DNA until it finds its consensus sequence, where it cleaves and resolves the cruciform DNA. This chain is Crossover junction endodeoxyribonuclease RuvC, found in Helicobacter pylori (strain P12).